The sequence spans 266 residues: tRNA pseudouridine synthase A (266 aa).

Asp52 (nucleophile) is an active-site residue. Tyr113 is a substrate binding site.

Belongs to the tRNA pseudouridine synthase TruA family. In terms of assembly, homodimer.

The enzyme catalyses uridine(38/39/40) in tRNA = pseudouridine(38/39/40) in tRNA. In terms of biological role, formation of pseudouridine at positions 38, 39 and 40 in the anticodon stem and loop of transfer RNAs. The polypeptide is tRNA pseudouridine synthase A (Agrobacterium fabrum (strain C58 / ATCC 33970) (Agrobacterium tumefaciens (strain C58))).